We begin with the raw amino-acid sequence, 212 residues long: Pyrrolidone-carboxylate peptidase (212 aa).

Active-site residues include Glu-80, Cys-143, and His-165.

Belongs to the peptidase C15 family. Homotetramer.

It localises to the cytoplasm. The catalysed reaction is Release of an N-terminal pyroglutamyl group from a polypeptide, the second amino acid generally not being Pro.. Functionally, removes 5-oxoproline from various penultimate amino acid residues except L-proline. The protein is Pyrrolidone-carboxylate peptidase of Vibrio vulnificus (strain CMCP6).